The sequence spans 109 residues: MAHSVLDSMDPSSSIRVEHDRKRRQFSVRLNGCHDRAVLLYEYVGKKTVDLQHTEVPDAFRGRGIAKHLAKAAMDFVVEEDLKAHLTCWYIQKYVKENPLPQYLERLQP.

Residues 18-108 (EHDRKRRQFS…PLPQYLERLQ (91 aa)) enclose the N-acetyltransferase domain.

The protein belongs to the NATD1 family.

The chain is Protein NATD1 (natd1) from Xenopus tropicalis (Western clawed frog).